Reading from the N-terminus, the 343-residue chain is Delta(1)-pyrroline-2-carboxylate/Delta(1)-piperideine-2-carboxylate reductase (343 aa).

The Charge relay system role is filled by Ser53. His54 functions as the Proton donor in the catalytic mechanism. Residue Arg58 participates in substrate binding. 126-130 is a binding site for NADP(+); that stretch reads HFAAL. Thr166 contributes to the substrate binding site. 184–186 is an NADP(+) binding site; it reads DLA. Substrate is bound at residue 192 to 193; it reads HG. Catalysis depends on Asp194, which acts as the Charge relay system. Residues 236–237 and 309–315 each bind NADP(+); these read HK and RLPGDRR.

Belongs to the LDH2/MDH2 oxidoreductase family. As to quaternary structure, homodimer.

The enzyme catalyses L-pipecolate + NADP(+) = Delta(1)-piperideine-2-carboxylate + NADPH + H(+). The catalysed reaction is L-proline + NADP(+) = 1-pyrroline-2-carboxylate + NADPH + H(+). It carries out the reaction N-methyl-L-alanine + NADP(+) + H2O = methylamine + pyruvate + NADPH + H(+). Is inhibited by the substrate analog pyrrole-2-carboxylate, and by 2-picolinate. Its function is as follows. Catalyzes the reduction of both Delta(1)-pyrroline-2-carboxylate (Pyr2C) and Delta(1)-piperideine-2-carboxylate (Pip2C) to L-proline and L-pipecolate, respectively, using NADPH as the electron donor. Can catalyze the reverse oxidation reactions, albeit at a much lower rate. Is also able to catalyze in vitro the NADPH-dependent formation of N-methylalanine from pyruvate and N-methylamine; can act on other alpha-keto acids and specifically uses methylamine and not ammonia for these reductive amination reactions. Can use NADH instead of NADPH, although with much less efficiency. This Pseudomonas syringae pv. tomato protein is Delta(1)-pyrroline-2-carboxylate/Delta(1)-piperideine-2-carboxylate reductase.